The following is a 440-amino-acid chain: MKMTGWKKKLCRGHHLWALGCYMLLAVVALRLSLRLKCDVDSLDLESRDFQSQRCRDVLYKNLKLPAKRSINCSGITRGDQEAVVQALLDNLEVKKKRLPFTDTYYLNITRDCEQFKAQRKFIQFPLSKEELDFPIAYSMVVHEKIENFERLLRAVYAPQNIYCVHVDVKSPETFKEAVKAIISCFPNVFMASKLVPVVYASWSRVQADLNCMEDLLQSSVPWKYLLNTCGTDFPIKTNAEMVLALKMLNGKNSMESEIPSEYKKTRWKYRYEVTDRLSLTSKMKDPPPDNLPVFTGNAYFVASRAFVQHVLENPKSQRLIEWVKDTYSPDEHLWATLQRAPWMPGSVPYHPKYHISDMTAIARLVKWQGHEGDVSMGAPYAPCSGIHQRAICIYGVGDLHWILQNHHLLANKFDPRVDDNVLQCLEEYLRHKAIYGTEL.

The Cytoplasmic segment spans residues 1-12 (MKMTGWKKKLCR). A helical; Signal-anchor for type II membrane protein membrane pass occupies residues 13-30 (GHHLWALGCYMLLAVVAL). Residues 31-440 (RLSLRLKCDV…RHKAIYGTEL (410 aa)) lie on the Lumenal side of the membrane. 4 disulfides stabilise this stretch: Cys-73/Cys-230, Cys-164/Cys-384, Cys-185/Cys-212, and Cys-393/Cys-425. N-linked (GlcNAc...) asparagine glycosylation occurs at Asn-108.

It belongs to the glycosyltransferase 14 family. N-glycosylated.

The protein resides in the golgi apparatus membrane. The enzyme catalyses a 3-O-[beta-D-galactosyl-(1-&gt;3)-N-acetyl-alpha-D-galactosaminyl]-L-seryl-[protein] + UDP-N-acetyl-alpha-D-glucosamine = 3-O-{beta-D-galactosyl-(1-&gt;3)-[N-acetyl-beta-D-glucosaminyl-(1-&gt;6)]-N-acetyl-alpha-D-galactosaminyl}-L-seryl-[protein] + UDP + H(+). It catalyses the reaction a 3-O-[beta-D-galactosyl-(1-&gt;3)-N-acetyl-alpha-D-galactosaminyl]-L-threonyl-[protein] + UDP-N-acetyl-alpha-D-glucosamine = a 3-O-{beta-D-galactosyl-(1-&gt;3)-[N-acetyl-beta-D-glucosaminyl-(1-&gt;6)]-N-acetyl-alpha-D-galactosaminyl}-L-threonyl-[protein] + UDP + H(+). The catalysed reaction is a beta-D-Gal-(1-&gt;4)-beta-D-GlcNAc-(1-&gt;3)-beta-D-Gal-(1-&gt;4)-beta-D-GlcNAc derivative + UDP-N-acetyl-alpha-D-glucosamine = a beta-D-Gal-(1-&gt;4)-beta-D-GlcNAc-(1-&gt;3)-[beta-D-GlcNAc-(1-&gt;6)]-beta-D-Gal-(1-&gt;4)-N-acetyl-beta-D-glucosaminyl derivative + UDP + H(+). It carries out the reaction 3-O-[N-acetyl-beta-D-glucosaminyl-(1-&gt;3)-N-acetyl-alpha-D-galactosaminyl]-L-seryl-[protein] + UDP-N-acetyl-alpha-D-glucosamine = 3-O-[N-acetyl-beta-D-glucosaminyl-(1-&gt;3)-[N-acetyl-beta-D-glucosaminyl-(1-&gt;6)]-N-acetyl-alpha-D-galactosaminyl]-L-seryl-[protein] + UDP + H(+). The enzyme catalyses a 3-O-[N-acetyl-beta-D-glucosaminyl-(1-&gt;3)-N-acetyl-alpha-D-galactosaminyl]-L-threonyl-[protein] + UDP-N-acetyl-alpha-D-glucosamine = 3-O-[N-acetyl-beta-D-glucosaminyl-(1-&gt;3)-[N-acetyl-beta-D-glucosaminyl-(1-&gt;6)]-N-acetyl-alpha-D-galactosaminyl]-L-threonyl-[protein] + UDP + H(+). It participates in protein modification; protein glycosylation. Functionally, glycosyltransferase that can synthesize all known mucin beta 6 N-acetylglucosaminides. Mediates core 2 and core 4 O-glycan branching, 2 important steps in mucin-type biosynthesis. Also has I-branching enzyme activity by converting linear into branched poly-N-acetyllactosaminoglycans, leading to introduce the blood group I antigen during embryonic development. This is Beta-1,3-galactosyl-O-glycosyl-glycoprotein beta-1,6-N-acetylglucosaminyltransferase 3 (GCNT3) from Ovis aries (Sheep).